The primary structure comprises 346 residues: Short-wave-sensitive opsin 1 (346 aa).

Residues 1–31 lie on the Extracellular side of the membrane; the sequence is MSGEDEFYLFQNISSVGPWDGPQYHIAPVWA. The N-linked (GlcNAc...) asparagine glycan is linked to Asn-12. Residues 32-56 traverse the membrane as a helical segment; it reads FHLQAAFMGFVFFAGTPLNATVLVA. Over 57–68 the chain is Cytoplasmic; sequence TLHYKKLRQPLN. The chain crosses the membrane as a helical span at residues 69–94; that stretch reads YILVNVSLGGFLFCIFSVFTVFIASC. Topologically, residues 95–108 are extracellular; the sequence is HGYFLFGRHVCALE. A disulfide bridge links Cys-105 with Cys-182. A helical transmembrane segment spans residues 109–128; that stretch reads AFLGSVAGLVTGWSLAFLAF. Over 129-147 the chain is Cytoplasmic; the sequence is ERYLVICKPFGNIRFNSKH. The chain crosses the membrane as a helical span at residues 148 to 171; the sequence is ALTVVLITWTIGIGVSIPPFFGWS. The Extracellular segment spans residues 172–197; it reads RFIPEGLQCSCGPDWYTVGTKYRSEH. Residues 198–225 form a helical membrane-spanning segment; sequence YTWFLFIFCFIIPLSLICFSYFQLLRTL. At 226–247 the chain is on the cytoplasmic side; it reads RAVAAQQQESATTQKAEREVSH. A helical membrane pass occupies residues 248-271; the sequence is MVVVMVGSFCLCYVPYAALAMYMV. Residues 272–279 lie on the Extracellular side of the membrane; that stretch reads NNRNHGLY. A helical membrane pass occupies residues 280–304; the sequence is LRLVTIPAFFSKSSCVYNPIIYCFM. The residue at position 291 (Lys-291) is an N6-(retinylidene)lysine. At 305 to 346 the chain is on the cytoplasmic side; it reads NKQFRACILEMVCRKPMTDESDMSGSQKTEVSTVSSSKVGPH. The disordered stretch occupies residues 322–346; sequence TDESDMSGSQKTEVSTVSSSKVGPH. Low complexity predominate over residues 330 to 346; the sequence is SQKTEVSTVSSSKVGPH.

This sequence belongs to the G-protein coupled receptor 1 family. Opsin subfamily. In terms of processing, phosphorylated on some or all of the serine and threonine residues present in the C-terminal region. As to expression, expressed in cone photoreceptor cells.

It localises to the cell membrane. It is found in the photoreceptor inner segment. The protein resides in the cell projection. The protein localises to the cilium. Its subcellular location is the photoreceptor outer segment. It localises to the cytoplasm. It is found in the perinuclear region. Functionally, visual pigments are the light-absorbing molecules that mediate vision. They consist of an apoprotein, opsin, covalently linked to cis-retinal. Required for the maintenance of cone outer segment organization in the ventral retina, but not essential for the maintenance of functioning cone photoreceptors. Involved in ensuring correct abundance and localization of retinal membrane proteins. May increase spectral sensitivity in dim light. The polypeptide is Short-wave-sensitive opsin 1 (Opn1sw) (Rattus norvegicus (Rat)).